The primary structure comprises 151 residues: UPF0179 protein MJ1627 (151 aa).

It belongs to the UPF0179 family.

This Methanocaldococcus jannaschii (strain ATCC 43067 / DSM 2661 / JAL-1 / JCM 10045 / NBRC 100440) (Methanococcus jannaschii) protein is UPF0179 protein MJ1627.